A 157-amino-acid chain; its full sequence is Transmembrane protein 50A (157 aa).

Ser-2 carries the N-acetylserine modification. Ser-2 carries the phosphoserine modification. A run of 4 helical transmembrane segments spans residues 26-46, 58-78, 95-115, and 126-146; these read IAAG…AVMY, TCGV…NGQV, IWLF…MWIL, and VVYP…GGLV.

Belongs to the UPF0220 family.

The protein localises to the membrane. The chain is Transmembrane protein 50A (Tmem50a) from Mus musculus (Mouse).